Consider the following 118-residue polypeptide: MNGSSNSGSPGGGQTGDDDGTGFDLATETRIKTKKPSLYRVLLLNDDYTPMEFVVFILERFFNRSREQATRIMLHVHQKGVGLCGVYTYEVAETKVAQVLDLARRHEHPLQCVMEKED.

The disordered stretch occupies residues 1-24; the sequence is MNGSSNSGSPGGGQTGDDDGTGFD.

This sequence belongs to the ClpS family. Binds to the N-terminal domain of the chaperone ClpA.

In terms of biological role, involved in the modulation of the specificity of the ClpAP-mediated ATP-dependent protein degradation. The chain is ATP-dependent Clp protease adapter protein ClpS from Hyphomonas neptunium (strain ATCC 15444).